We begin with the raw amino-acid sequence, 83 residues long: Exodeoxyribonuclease 7 small subunit (83 aa).

It belongs to the XseB family. In terms of assembly, heterooligomer composed of large and small subunits.

It is found in the cytoplasm. The catalysed reaction is Exonucleolytic cleavage in either 5'- to 3'- or 3'- to 5'-direction to yield nucleoside 5'-phosphates.. In terms of biological role, bidirectionally degrades single-stranded DNA into large acid-insoluble oligonucleotides, which are then degraded further into small acid-soluble oligonucleotides. The polypeptide is Exodeoxyribonuclease 7 small subunit (Rhizobium etli (strain ATCC 51251 / DSM 11541 / JCM 21823 / NBRC 15573 / CFN 42)).